Reading from the N-terminus, the 295-residue chain is Tyrosine recombinase XerC (295 aa).

Residues methionine 1 to threonine 84 enclose the Core-binding (CB) domain. The region spanning lysine 105–arginine 289 is the Tyr recombinase domain. Residues arginine 145, lysine 169, histidine 241, arginine 244, and histidine 267 contribute to the active site. The active-site O-(3'-phospho-DNA)-tyrosine intermediate is the tyrosine 276.

It belongs to the 'phage' integrase family. XerC subfamily. Forms a cyclic heterotetrameric complex composed of two molecules of XerC and two molecules of XerD.

It localises to the cytoplasm. In terms of biological role, site-specific tyrosine recombinase, which acts by catalyzing the cutting and rejoining of the recombining DNA molecules. The XerC-XerD complex is essential to convert dimers of the bacterial chromosome into monomers to permit their segregation at cell division. It also contributes to the segregational stability of plasmids. This Lactobacillus delbrueckii subsp. bulgaricus (strain ATCC 11842 / DSM 20081 / BCRC 10696 / JCM 1002 / NBRC 13953 / NCIMB 11778 / NCTC 12712 / WDCM 00102 / Lb 14) protein is Tyrosine recombinase XerC.